An 832-amino-acid chain; its full sequence is Protein P (832 aa).

Residues 1-177 form a terminal protein domain (TP) region; it reads MPLSCPHFRK…FCGSPYSWEQ (177 aa). Residues 178–335 form a spacer region; it reads ELQHGAEPVC…YCLSHLVNLL (158 aa). Residues 208-224 are compositionally biased toward low complexity; the sequence is KQSRLGLQSQQRQLARS. Residues 208 to 241 are disordered; that stretch reads KQSRLGLQSQQRQLARSHQGRSGSIRARVHSTTR. Residues 336–679 form a polymerase/reverse transcriptase domain (RT) region; sequence EDWGPCTEHG…YLTLYPVARQ (344 aa). Residues 346 to 589 form the Reverse transcriptase domain; that stretch reads EHHIRIPRTP…YSLNFMGYII (244 aa). D418, D540, and D541 together coordinate Mg(2+).

This sequence belongs to the hepadnaviridae P protein family.

The enzyme catalyses DNA(n) + a 2'-deoxyribonucleoside 5'-triphosphate = DNA(n+1) + diphosphate. The catalysed reaction is Endonucleolytic cleavage to 5'-phosphomonoester.. Its activity is regulated as follows. Activated by host HSP70 and HSP40 in vitro to be able to bind the epsilon loop of the pgRNA. Because deletion of the RNase H region renders the protein partly chaperone-independent, the chaperones may be needed indirectly to relieve occlusion of the RNA-binding site by this domain. Inhibited by several reverse-transcriptase inhibitors: Lamivudine, Adefovir and Entecavir. Its function is as follows. Multifunctional enzyme that converts the viral RNA genome into dsDNA in viral cytoplasmic capsids. This enzyme displays a DNA polymerase activity that can copy either DNA or RNA templates, and a ribonuclease H (RNase H) activity that cleaves the RNA strand of RNA-DNA heteroduplexes in a partially processive 3'- to 5'-endonucleasic mode. Neo-synthesized pregenomic RNA (pgRNA) are encapsidated together with the P protein, and reverse-transcribed inside the nucleocapsid. Initiation of reverse-transcription occurs first by binding the epsilon loop on the pgRNA genome, and is initiated by protein priming, thereby the 5'-end of (-)DNA is covalently linked to P protein. Partial (+)DNA is synthesized from the (-)DNA template and generates the relaxed circular DNA (RC-DNA) genome. After budding and infection, the RC-DNA migrates in the nucleus, and is converted into a plasmid-like covalently closed circular DNA (cccDNA). The activity of P protein does not seem to be necessary for cccDNA generation, and is presumably released from (+)DNA by host nuclear DNA repair machinery. This chain is Protein P, found in Gibbon hepatitis B virus subtype ayw3q (isolate Hope) (HBVgbn).